Consider the following 388-residue polypeptide: Mannitol-1-phosphate 5-dehydrogenase (388 aa).

An NAD(+)-binding site is contributed by 4–15 (AVHFGAGNIGRG).

The protein belongs to the mannitol dehydrogenase family.

The catalysed reaction is D-mannitol 1-phosphate + NAD(+) = beta-D-fructose 6-phosphate + NADH + H(+). The sequence is that of Mannitol-1-phosphate 5-dehydrogenase from Lactococcus lactis subsp. cremoris (strain SK11).